A 186-amino-acid chain; its full sequence is Transcription factor HES-3 (186 aa).

Residues 1-49 (MEKKRRARINVSLEQLKSLLEKHYSHQIRKRKLEKADILELSVKYMRSL) enclose the bHLH domain. Positions 65–99 (QPSGFRSCLPGVSQLLRRGDEVGSGLRCPLVPESA) constitute an Orange domain. The disordered stretch occupies residues 128–186 (APAAGGPRSPPPLLLLPESLPGSSASVPPPQPASSRCAESPGLGLRVWRPWGSPGDDLN). Over residues 142-153 (LLPESLPGSSAS) the composition is skewed to low complexity. A WRPW motif motif is present at residues 175–178 (WRPW).

In terms of assembly, transcription repression requires formation of a complex with a corepressor protein of the Groucho/TLE family.

Its subcellular location is the nucleus. Transcriptional repressor of genes that require a bHLH protein for their transcription. The protein is Transcription factor HES-3 (HES3) of Homo sapiens (Human).